The sequence spans 341 residues: N-acetyl-gamma-glutamyl-phosphate reductase (341 aa).

C145 is an active-site residue.

It belongs to the NAGSA dehydrogenase family. Type 1 subfamily.

It is found in the cytoplasm. The enzyme catalyses N-acetyl-L-glutamate 5-semialdehyde + phosphate + NADP(+) = N-acetyl-L-glutamyl 5-phosphate + NADPH + H(+). Its pathway is amino-acid biosynthesis; L-arginine biosynthesis; N(2)-acetyl-L-ornithine from L-glutamate: step 3/4. Its function is as follows. Catalyzes the NADPH-dependent reduction of N-acetyl-5-glutamyl phosphate to yield N-acetyl-L-glutamate 5-semialdehyde. This chain is N-acetyl-gamma-glutamyl-phosphate reductase, found in Methanothrix thermoacetophila (strain DSM 6194 / JCM 14653 / NBRC 101360 / PT) (Methanosaeta thermophila).